A 145-amino-acid chain; its full sequence is Large ribosomal subunit protein uL13 (145 aa).

This sequence belongs to the universal ribosomal protein uL13 family. Part of the 50S ribosomal subunit.

Functionally, this protein is one of the early assembly proteins of the 50S ribosomal subunit, although it is not seen to bind rRNA by itself. It is important during the early stages of 50S assembly. This is Large ribosomal subunit protein uL13 from Macrococcus caseolyticus (strain JCSC5402) (Macrococcoides caseolyticum).